The primary structure comprises 485 residues: uncharacterized protein (485 aa).

The next 3 membrane-spanning stretches (helical) occupy residues 284–304 (LLALNGLFTLMISHNLDYPLF), 328–348 (LLDLFLSSTHLPATLIASFIK), and 353–373 (LALTAPPGAIAIVIPFIYNCL).

This sequence belongs to the CBF/MAK21 family.

The protein resides in the membrane. This is an uncharacterized protein from Schizosaccharomyces pombe (strain 972 / ATCC 24843) (Fission yeast).